We begin with the raw amino-acid sequence, 1278 residues long: Dynactin subunit 1 (1278 aa).

The segment at 1–25 is disordered; that stretch reads MAQSKRHVYSRTPSGSRMSAEASAR. The CAP-Gly domain occupies 48–90; sequence GATLFATGKWVGVILDEAKGKNDGTVQGRKYFTCDEGHGIFVR. The disordered stretch occupies residues 100-223; the sequence is GADTTSPETP…SKEEEGLRAQ (124 aa). Polar residues predominate over residues 102 to 114; that stretch reads DTTSPETPDSSAS. Position 108 is a phosphothreonine (threonine 108). The segment covering 129 to 152 has biased composition (basic residues); the sequence is SKLRGLKPKKAPTARKTTTRRPKP. Phosphothreonine; by SLK is present on residues threonine 145, threonine 146, and threonine 147. The segment covering 161 to 184 has biased composition (low complexity); that stretch reads AGASSSLGPSGSASAGELSSSEPS. Serine 179 is modified (phosphoserine; by PLK1). The residue at position 212 (serine 212) is a Phosphoserine; by CDK1. 3 coiled-coil regions span residues 213–547, 943–1049, and 1182–1211; these read PSKE…RQQQ, LKLE…EGLR, and SAQL…KETV. The segment covering 214–223 has biased composition (basic and acidic residues); the sequence is SKEEEGLRAQ. The tract at residues 911-1278 is interaction with HPS6; it reads EYDAERPPSK…LHQLHSRLIS (368 aa).

This sequence belongs to the dynactin 150 kDa subunit family. Monomer and homodimer. Subunit of dynactin, a multiprotein complex part of a tripartite complex with dynein and a adapter, such as BICDL1, BICD2 or HOOK3. The dynactin complex is built around ACTR1A/ACTB filament and consists of an actin-related filament composed of a shoulder domain, a pointed end and a barbed end. Its length is defined by its flexible shoulder domain. The soulder is composed of 2 DCTN1 subunits, 4 DCTN2 and 2 DCTN3. DCTN1/p150(glued) binds directly to microtubules and to cytoplasmic dynein. The 4 DCNT2 (via N-terminus) bind the ACTR1A filament and act as molecular rulers to determine the length. The pointed end is important for binding dynein-dynactin cargo adapters. Consists of 4 subunits: ACTR10, DCNT4, DCTN5 and DCTN6. The barbed end is composed of a CAPZA1:CAPZB heterodimers, which binds ACTR1A/ACTB filament and dynactin and stabilizes dynactin. Interacts with the C-terminus of MAPRE1, MAPRE2 and MAPRE3. Interacts (via C-terminus) with SNX6. Interacts with CLN3, DYNAP, ECPAS and FBXL5. Interacts with MISP; this interaction regulates its distribution at the cell cortex. Interacts with CEP131. Interacts with CEP126. Interacts with CLIP1. Interacts with dynein intermediate chain and dynein heavy chain. Interacts with PLK1 (via POLO-box domain). Interacts with TBCB. Binds preferentially to tyrosinated microtubules than to detyrosinated microtubules. Interacts with PARD6A. Interacts with HPS6. Interacts with KIF3A. Interacts with BICD2. Interacts with DST (isoform 9). Interacts with DST (isoform 1). Identified in a complex with MREG and RILP. Interacts with BCCIP (isoform 2/alpha). Interacts with DCDC1. Interacts with AKNA. Interacts with DYNC1I2. Interacts with RUFY3 and RUFY4. In terms of processing, ubiquitinated by a SCF complex containing FBXL5, leading to its degradation by the proteasome. Post-translationally, phosphorylation by SLK at Thr-145, Thr-146 and Thr-147 targets DCTN1 to the centrosome. It is uncertain if SLK phosphorylates all three threonines or one or two of them. PLK1-mediated phosphorylation at Ser-179 is essential for its localization in the nuclear envelope, promotes its dissociation from microtubules during early mitosis and positively regulates nuclear envelope breakdown during prophase. As to expression, brain.

The protein localises to the cytoplasm. It localises to the cytoskeleton. It is found in the microtubule organizing center. Its subcellular location is the centrosome. The protein resides in the centriole. The protein localises to the spindle. It localises to the nucleus envelope. It is found in the cell cortex. Its function is as follows. Part of the dynactin complex that activates the molecular motor dynein for ultra-processive transport along microtubules. Plays a key role in dynein-mediated retrograde transport of vesicles and organelles along microtubules by recruiting and tethering dynein to microtubules. Binds to both dynein and microtubules providing a link between specific cargos, microtubules and dynein. Essential for targeting dynein to microtubule plus ends, recruiting dynein to membranous cargos and enhancing dynein processivity (the ability to move along a microtubule for a long distance without falling off the track). Can also act as a brake to slow the dynein motor during motility along the microtubule. Can regulate microtubule stability by promoting microtubule formation, nucleation and polymerization and by inhibiting microtubule catastrophe in neurons. Inhibits microtubule catastrophe by binding both to microtubules and to tubulin, leading to enhanced microtubule stability along the axon. Plays a role in metaphase spindle orientation. Plays a role in centriole cohesion and subdistal appendage organization and function. Its recruitment to the centriole in a KIF3A-dependent manner is essential for the maintenance of centriole cohesion and the formation of subdistal appendage. Also required for microtubule anchoring at the mother centriole. Plays a role in primary cilia formation. This chain is Dynactin subunit 1, found in Homo sapiens (Human).